The sequence spans 376 residues: uncharacterized protein (376 aa).

Over 1–280 (MPIPIIAHIA…RTPGFRRVVS (280 aa)) the chain is Lumenal. The NADP(+) site is built by Ile-66, Asp-115, Arg-178, Lys-233, Val-270, and Thr-272. Lys-233 functions as the Lowers pKa of active site Tyr in the catalytic mechanism. Residues 281-301 (FGKVWGLFLYLLLWPFWWLLL) traverse the membrane as a helical segment. At 302-376 (KGTIHGAQSF…KKKKIKKSKK (75 aa)) the chain is on the cytoplasmic side.

Belongs to the short-chain dehydrogenases/reductases (SDR) family.

Its subcellular location is the cytoplasm. The protein resides in the endoplasmic reticulum membrane. In terms of biological role, may be involved in lipid metabolism. This is an uncharacterized protein from Schizosaccharomyces pombe (strain 972 / ATCC 24843) (Fission yeast).